Consider the following 124-residue polypeptide: MKNVLIIFGKPYCSICENVSEAVEELKSEYDILHVDILSFFLKDGDSSMLGDVKRGTLIGNFAAHLSNYIVSIFKYNPQTKQMAFVDINKSLDFTKTDKSLVNLEILKSEIEKATYGVWPPVTE.

The cysteines at positions 13 and 16 are disulfide-linked.

Belongs to the glutaredoxin family. Homodimer.

The protein resides in the host cytoplasm. Functionally, glutaredoxin necessary for virion morphogenesis and virus replication. Functions as a thiol-disulfide transfer protein between membrane-associated OPG128 and substrates OPG095 or OPG053. The complete pathway for formation of disulfide bonds in intracellular virion membrane proteins sequentially involves oxidation of OPG072, OPG128 and OPG088. Exhibit thioltransferase and dehydroascorbate reductase activities in vitro. The sequence is that of Glutaredoxin-2 (OPG088) from Mus musculus (Mouse).